Reading from the N-terminus, the 354-residue chain is 3'-5' exonuclease (354 aa).

The interval 1–120 (MERFLTKMPI…PSPEKEKPEK (120 aa)) is disordered. 2 stretches are compositionally biased toward basic and acidic residues: residues 13–30 (KANE…ETPK) and 37–50 (KKDT…KENA). Residues 59–70 (TKGRPGRPAAKR) are compositionally biased toward basic residues. Over residues 71–91 (KNLDTPDVKDEKIAMEEENPP) the composition is skewed to basic and acidic residues. S104, S110, and S112 each carry phosphoserine. The 3'-5' exonuclease domain maps to 149-314 (WVEKQKDDVV…GQVIYRELER (166 aa)). Mg(2+) contacts are provided by D163, E165, and D301.

This sequence belongs to the WRNexo family.

Its subcellular location is the nucleus. Functionally, has exonuclease activity on both single-stranded and duplex templates bearing overhangs, but not blunt ended duplex DNA, and cleaves in a 3'-5' direction. Essential for the formation of DNA replication focal centers. Has an important role in maintaining genome stability. The polypeptide is 3'-5' exonuclease (Drosophila simulans (Fruit fly)).